We begin with the raw amino-acid sequence, 156 residues long: Ribonuclease H (156 aa).

The RNase H type-1 domain maps to 1-142; it reads MGKQVEIFTD…CDELARAAAN (142 aa). Positions 10, 48, 70, and 134 each coordinate Mg(2+).

The protein belongs to the RNase H family. Monomer. The cofactor is Mg(2+).

It localises to the cytoplasm. The catalysed reaction is Endonucleolytic cleavage to 5'-phosphomonoester.. Endonuclease that specifically degrades the RNA of RNA-DNA hybrids. The chain is Ribonuclease H from Photorhabdus luminescens (Xenorhabdus luminescens).